The following is a 558-amino-acid chain: Dihydroxy-acid dehydratase (558 aa).

Cysteine 50 contacts [2Fe-2S] cluster. Aspartate 82 provides a ligand contact to Mg(2+). Residue cysteine 123 coordinates [2Fe-2S] cluster. Residues aspartate 124 and lysine 125 each coordinate Mg(2+). Lysine 125 bears the N6-carboxylysine mark. Cysteine 195 is a binding site for [2Fe-2S] cluster. Glutamate 447 contributes to the Mg(2+) binding site. The active-site Proton acceptor is the serine 472.

The protein belongs to the IlvD/Edd family. In terms of assembly, homodimer. [2Fe-2S] cluster is required as a cofactor. It depends on Mg(2+) as a cofactor.

The catalysed reaction is (2R)-2,3-dihydroxy-3-methylbutanoate = 3-methyl-2-oxobutanoate + H2O. It carries out the reaction (2R,3R)-2,3-dihydroxy-3-methylpentanoate = (S)-3-methyl-2-oxopentanoate + H2O. It participates in amino-acid biosynthesis; L-isoleucine biosynthesis; L-isoleucine from 2-oxobutanoate: step 3/4. The protein operates within amino-acid biosynthesis; L-valine biosynthesis; L-valine from pyruvate: step 3/4. Functions in the biosynthesis of branched-chain amino acids. Catalyzes the dehydration of (2R,3R)-2,3-dihydroxy-3-methylpentanoate (2,3-dihydroxy-3-methylvalerate) into 2-oxo-3-methylpentanoate (2-oxo-3-methylvalerate) and of (2R)-2,3-dihydroxy-3-methylbutanoate (2,3-dihydroxyisovalerate) into 2-oxo-3-methylbutanoate (2-oxoisovalerate), the penultimate precursor to L-isoleucine and L-valine, respectively. The chain is Dihydroxy-acid dehydratase from Saccharolobus islandicus (strain Y.N.15.51 / Yellowstone #2) (Sulfolobus islandicus).